A 425-amino-acid polypeptide reads, in one-letter code: Phosphomethylpyrimidine synthase (425 aa).

Residues M94, Y123, H162, 184 to 186 (SRG), 225 to 228 (NGMR), and E264 contribute to the substrate site. Position 268 (H268) interacts with Zn(2+). Y291 contacts substrate. H332 is a Zn(2+) binding site. C407, C410, and C414 together coordinate [4Fe-4S] cluster.

The protein belongs to the ThiC family. [4Fe-4S] cluster is required as a cofactor.

It carries out the reaction 5-amino-1-(5-phospho-beta-D-ribosyl)imidazole + S-adenosyl-L-methionine = 4-amino-2-methyl-5-(phosphooxymethyl)pyrimidine + CO + 5'-deoxyadenosine + formate + L-methionine + 3 H(+). The protein operates within cofactor biosynthesis; thiamine diphosphate biosynthesis. Its function is as follows. Catalyzes the synthesis of the hydroxymethylpyrimidine phosphate (HMP-P) moiety of thiamine from aminoimidazole ribotide (AIR) in a radical S-adenosyl-L-methionine (SAM)-dependent reaction. In Methanocorpusculum labreanum (strain ATCC 43576 / DSM 4855 / Z), this protein is Phosphomethylpyrimidine synthase.